The following is a 365-amino-acid chain: Deoxyribonuclease-2-alpha (365 aa).

The first 19 residues, M1 to T19, serve as a signal peptide directing secretion. C22 and C162 are joined by a disulfide. 3 N-linked (GlcNAc...) asparagine glycosylation sites follow: N215, N269, and N293. Disulfide bonds link C270–C348 and C311–C330. The active site involves H298.

It belongs to the DNase II family.

Its subcellular location is the lysosome. It carries out the reaction Endonucleolytic cleavage to nucleoside 3'-phosphates and 3'-phosphooligonucleotide end-products.. In terms of biological role, hydrolyzes DNA under acidic conditions with a preference for double-stranded DNA. Plays a major role in the clearance of nucleic acids generated through apoptosis, hence preventing autoinflammation. Necessary for proper fetal development and for definitive erythropoiesis in fetal liver and bone marrow, where it degrades nuclear DNA expelled from erythroid precursor cells. The chain is Deoxyribonuclease-2-alpha (DNASE2) from Bos taurus (Bovine).